Reading from the N-terminus, the 329-residue chain is MSSAYCSSAVAVSAAATASSAATFNPLLSSHSNSQLFYRFTPKSFKLVANCPNPLILHSNIRRHRFFCAAETEASSADDEIQASVEEEEEVEEEGDEGEEEVEEEKQTTQASGEEGRLYVGNLPYTITSSELSQIFGEAGTVVDVQIVYDKVTDRSRGFGFVTMGSIEEAKEAMQMFNSSQIGGRTVKVNFPEVPRGGENEVMRTKIRDNNRSYVDSPHKVYAGNLGWNLTSQGLKDAFGDQPGVLGAKVIYERNTGRSRGFGFISFESAENVQSALATMNGVEVEGRALRLNLASEREKPTVSPPSVEEGETEEASLESNEVLSNVSA.

The transit peptide at 1 to 69 (MSSAYCSSAV…NIRRHRFFCA (69 aa)) directs the protein to the chloroplast. Residues 77–104 (ADDEIQASVEEEEEVEEEGDEGEEEVEE) show a composition bias toward acidic residues. Disordered regions lie at residues 77-117 (ADDE…EEGR) and 296-329 (SEREKPTVSPPSVEEGETEEASLESNEVLSNVSA). 2 RRM domains span residues 116 to 194 (GRLY…FPEV) and 219 to 297 (HKVY…LASE).

The protein localises to the plastid. It localises to the chloroplast. Its function is as follows. Could be involved in splicing and/or processing of chloroplast RNAs. The polypeptide is RNA-binding protein CP33, chloroplastic (Arabidopsis thaliana (Mouse-ear cress)).